Reading from the N-terminus, the 901-residue chain is Protein translocase subunit SecA (901 aa).

ATP-binding positions include Gln87, 105–109 (GEGKT), and Asp512. Residues 859–901 (HQDDDSAAAAALAAQTGERKVGRNDPCPCGSGKKYKQCHGRLQ) are disordered. Zn(2+) is bound by residues Cys885, Cys887, Cys896, and His897. A compositionally biased stretch (basic residues) spans 891-901 (KKYKQCHGRLQ).

It belongs to the SecA family. As to quaternary structure, monomer and homodimer. Part of the essential Sec protein translocation apparatus which comprises SecA, SecYEG and auxiliary proteins SecDF-YajC and YidC. It depends on Zn(2+) as a cofactor.

It is found in the cell inner membrane. It localises to the cytoplasm. It carries out the reaction ATP + H2O + cellular proteinSide 1 = ADP + phosphate + cellular proteinSide 2.. Functionally, part of the Sec protein translocase complex. Interacts with the SecYEG preprotein conducting channel. Has a central role in coupling the hydrolysis of ATP to the transfer of proteins into and across the cell membrane, serving both as a receptor for the preprotein-SecB complex and as an ATP-driven molecular motor driving the stepwise translocation of polypeptide chains across the membrane. This chain is Protein translocase subunit SecA, found in Escherichia coli O139:H28 (strain E24377A / ETEC).